The primary structure comprises 227 residues: Enolase-phosphatase E1 (227 aa).

Mg(2+) is bound by residues Asp11 and Glu13. Substrate-binding positions include 118–119 and Lys161; that span reads SS. Asp186 serves as a coordination point for Mg(2+).

The protein belongs to the HAD-like hydrolase superfamily. MasA/MtnC family. Monomer. Mg(2+) is required as a cofactor.

Its subcellular location is the cytoplasm. It localises to the nucleus. It carries out the reaction 5-methylsulfanyl-2,3-dioxopentyl phosphate + H2O = 1,2-dihydroxy-5-(methylsulfanyl)pent-1-en-3-one + phosphate. The protein operates within amino-acid biosynthesis; L-methionine biosynthesis via salvage pathway; L-methionine from S-methyl-5-thio-alpha-D-ribose 1-phosphate: step 3/6. It participates in amino-acid biosynthesis; L-methionine biosynthesis via salvage pathway; L-methionine from S-methyl-5-thio-alpha-D-ribose 1-phosphate: step 4/6. Bifunctional enzyme that catalyzes the enolization of 2,3-diketo-5-methylthiopentyl-1-phosphate (DK-MTP-1-P) into the intermediate 2-hydroxy-3-keto-5-methylthiopentenyl-1-phosphate (HK-MTPenyl-1-P), which is then dephosphorylated to form the acireductone 1,2-dihydroxy-3-keto-5-methylthiopentene (DHK-MTPene). This chain is Enolase-phosphatase E1, found in Saccharomyces cerevisiae (strain YJM789) (Baker's yeast).